The sequence spans 225 residues: THAP domain-containing protein 1 B (225 aa).

The segment at 5-57 adopts a THAP-type zinc-finger fold; it reads CSAYGCKNRYDKDRPISFHKFPLKRPLLCKKWEAAVRRADFKPTKYSSICSDH. Residues 139–194 are a coiled coil; the sequence is VEDTVHQRRRIQQLEEQVDKLRKKLKIANQKCRRQERSLEKLEKEVSEYREAKGSG.

It belongs to the THAP1 family.

Its subcellular location is the nucleus. The protein localises to the nucleoplasm. Its function is as follows. DNA-binding transcription regulator that regulates endothelial cell proliferation and G1/S cell-cycle progression. Specifically binds the 5'-[AT]NTNN[GT]GGCA[AGT]-3' core DNA sequence and acts by modulating expression of pRB-E2F cell-cycle target genes. This is THAP domain-containing protein 1 B (thap1-b) from Xenopus laevis (African clawed frog).